We begin with the raw amino-acid sequence, 31 residues long: Cyclopsychotride-A (31 aa).

Positions 1 to 31 (SIPCGESCVFIPCTVTALLGCSCKSKVCYKN) form a cross-link, cyclopeptide (Ser-Asn). Intrachain disulfides connect cysteine 4–cysteine 21, cysteine 8–cysteine 23, and cysteine 13–cysteine 28.

Belongs to the cyclotide family. Bracelet subfamily. Post-translationally, this is a cyclic peptide.

Functionally, probably participates in a plant defense mechanism. Has antibiotic activity. Inhibits the cytopathic effects and replication of the human immunodeficiency virus. Active against both Gram-positive and Gram-negative bacteria. This Psychotria longipes protein is Cyclopsychotride-A.